The primary structure comprises 145 residues: Putative antiporter subunit mnhG2 (145 aa).

3 helical membrane passes run I11 to V31, V51 to V71, and R72 to A92.

Belongs to the CPA3 antiporters (TC 2.A.63) subunit G family. May form a heterooligomeric complex that consists of seven subunits: mnhA2, mnhB2, mnhC2, mnhD2, mnhE2, mnhF2 and mnhG2.

It is found in the cell membrane. In Staphylococcus aureus (strain bovine RF122 / ET3-1), this protein is Putative antiporter subunit mnhG2 (mnhG2).